The following is a 122-amino-acid chain: Large ribosomal subunit protein uL18 (122 aa).

The protein belongs to the universal ribosomal protein uL18 family. As to quaternary structure, part of the 50S ribosomal subunit; part of the 5S rRNA/L5/L18/L25 subcomplex. Contacts the 5S and 23S rRNAs.

Its function is as follows. This is one of the proteins that bind and probably mediate the attachment of the 5S RNA into the large ribosomal subunit, where it forms part of the central protuberance. The polypeptide is Large ribosomal subunit protein uL18 (Geotalea uraniireducens (strain Rf4) (Geobacter uraniireducens)).